Consider the following 211-residue polypeptide: Thiamine-phosphate synthase (211 aa).

Residues 38–42 and asparagine 70 each bind 4-amino-2-methyl-5-(diphosphooxymethyl)pyrimidine; that span reads QLREK. Aspartate 71 and aspartate 90 together coordinate Mg(2+). Residue serine 109 coordinates 4-amino-2-methyl-5-(diphosphooxymethyl)pyrimidine. 135–137 contacts 2-[(2R,5Z)-2-carboxy-4-methylthiazol-5(2H)-ylidene]ethyl phosphate; the sequence is TST. A 4-amino-2-methyl-5-(diphosphooxymethyl)pyrimidine-binding site is contributed by lysine 138. Residues glycine 165 and 185–186 each bind 2-[(2R,5Z)-2-carboxy-4-methylthiazol-5(2H)-ylidene]ethyl phosphate; that span reads IS.

The protein belongs to the thiamine-phosphate synthase family. It depends on Mg(2+) as a cofactor.

The catalysed reaction is 2-[(2R,5Z)-2-carboxy-4-methylthiazol-5(2H)-ylidene]ethyl phosphate + 4-amino-2-methyl-5-(diphosphooxymethyl)pyrimidine + 2 H(+) = thiamine phosphate + CO2 + diphosphate. It catalyses the reaction 2-(2-carboxy-4-methylthiazol-5-yl)ethyl phosphate + 4-amino-2-methyl-5-(diphosphooxymethyl)pyrimidine + 2 H(+) = thiamine phosphate + CO2 + diphosphate. The enzyme catalyses 4-methyl-5-(2-phosphooxyethyl)-thiazole + 4-amino-2-methyl-5-(diphosphooxymethyl)pyrimidine + H(+) = thiamine phosphate + diphosphate. Its pathway is cofactor biosynthesis; thiamine diphosphate biosynthesis; thiamine phosphate from 4-amino-2-methyl-5-diphosphomethylpyrimidine and 4-methyl-5-(2-phosphoethyl)-thiazole: step 1/1. Functionally, condenses 4-methyl-5-(beta-hydroxyethyl)thiazole monophosphate (THZ-P) and 2-methyl-4-amino-5-hydroxymethyl pyrimidine pyrophosphate (HMP-PP) to form thiamine monophosphate (TMP). In Clostridium acetobutylicum (strain ATCC 824 / DSM 792 / JCM 1419 / IAM 19013 / LMG 5710 / NBRC 13948 / NRRL B-527 / VKM B-1787 / 2291 / W), this protein is Thiamine-phosphate synthase.